The following is a 305-amino-acid chain: Porphobilinogen deaminase (305 aa).

Cys-239 carries the S-(dipyrrolylmethanemethyl)cysteine modification.

The protein belongs to the HMBS family. In terms of assembly, monomer. Dipyrromethane serves as cofactor.

It catalyses the reaction 4 porphobilinogen + H2O = hydroxymethylbilane + 4 NH4(+). It functions in the pathway porphyrin-containing compound metabolism; protoporphyrin-IX biosynthesis; coproporphyrinogen-III from 5-aminolevulinate: step 2/4. Its function is as follows. Tetrapolymerization of the monopyrrole PBG into the hydroxymethylbilane pre-uroporphyrinogen in several discrete steps. The sequence is that of Porphobilinogen deaminase from Dichelobacter nodosus (strain VCS1703A).